The sequence spans 203 residues: MVRLNVKPTRMELNNLKERLKTAERGHKLLKDKRDELMRRFISLIRENNQLRKEVESYLIDNLKAFAVAKSLKNSLMVEELFSIPSKEIELFVEKENIMSVTVPRMHMNITSQNENSEYSYLSSNSEMDDVFATMNSLIDKLLRLAEVEKTCQLMADEIEKTRRRVNGLEYSIIPNLSETIHYIELKLEEAERANLVRIMKVK.

Belongs to the V-ATPase D subunit family.

Functionally, produces ATP from ADP in the presence of a proton gradient across the membrane. In Streptococcus pneumoniae (strain Hungary19A-6), this protein is V-type ATP synthase subunit D.